Consider the following 501-residue polypeptide: Acyl-CoA-binding domain-containing protein 5A (501 aa).

One can recognise an ACB domain in the interval 9-98 (YEQRFNAAVK…LKLILESMPV (90 aa)). An acyl-CoA is bound by residues 20-29 (IQNLPPNGSF), 40-44 (YSYYK), lysine 66, and tyrosine 85. The disordered stretch occupies residues 173–405 (IDLEDREDDD…GERWGADGPM (233 aa)). Positions 176–195 (EDREDDDDEDEEGERDEVEE) are enriched in acidic residues. Residues 219–235 (SNGSISQHKGLSNGTHG) are compositionally biased toward polar residues. Composition is skewed to basic and acidic residues over residues 236–254 (SKSD…HMNH), 266–283 (NSEK…HVAS), and 328–366 (RSQD…KRSD). The segment covering 376-389 (SRSPASGSGSAGPQ) has biased composition (low complexity). Positions 406–437 (TENLNEQIICALARLQDDMQSVLQRLHTLEAL) form a coiled coil. A helical transmembrane segment spans residues 465-485 (WWPFDVSLGTVAFAVVWPFVV).

This sequence belongs to the ATG37 family.

It localises to the membrane. Acyl-CoA binding protein which acts as the peroxisome receptor for pexophagy but is dispensable for aggrephagy and nonselective autophagy. Binds medium- and long-chain acyl-CoA esters. The polypeptide is Acyl-CoA-binding domain-containing protein 5A (acbd5a) (Danio rerio (Zebrafish)).